The sequence spans 468 residues: Siroheme synthase (468 aa).

The segment at 1-202 is precorrin-2 dehydrogenase /sirohydrochlorin ferrochelatase; the sequence is MDYLPLFARL…EQHDSAEQWM (202 aa). NAD(+) contacts are provided by residues 22–23 and 43–44; these read DI and PS. Ser-126 carries the phosphoserine modification. Positions 214–468 are uroporphyrinogen-III C-methyltransferase; that stretch reads GEIVLVGAGP…SGKEHLINLA (255 aa). Pro-223 contacts S-adenosyl-L-methionine. The Proton acceptor role is filled by Asp-246. Lys-268 (proton donor) is an active-site residue. S-adenosyl-L-methionine is bound by residues 299–301, 329–330, Met-381, and Gly-410; these read GGD and TA.

In the N-terminal section; belongs to the precorrin-2 dehydrogenase / sirohydrochlorin ferrochelatase family. The protein in the C-terminal section; belongs to the precorrin methyltransferase family.

It carries out the reaction uroporphyrinogen III + 2 S-adenosyl-L-methionine = precorrin-2 + 2 S-adenosyl-L-homocysteine + H(+). It catalyses the reaction precorrin-2 + NAD(+) = sirohydrochlorin + NADH + 2 H(+). The enzyme catalyses siroheme + 2 H(+) = sirohydrochlorin + Fe(2+). It participates in cofactor biosynthesis; adenosylcobalamin biosynthesis; precorrin-2 from uroporphyrinogen III: step 1/1. Its pathway is cofactor biosynthesis; adenosylcobalamin biosynthesis; sirohydrochlorin from precorrin-2: step 1/1. It functions in the pathway porphyrin-containing compound metabolism; siroheme biosynthesis; precorrin-2 from uroporphyrinogen III: step 1/1. The protein operates within porphyrin-containing compound metabolism; siroheme biosynthesis; siroheme from sirohydrochlorin: step 1/1. It participates in porphyrin-containing compound metabolism; siroheme biosynthesis; sirohydrochlorin from precorrin-2: step 1/1. Multifunctional enzyme that catalyzes the SAM-dependent methylations of uroporphyrinogen III at position C-2 and C-7 to form precorrin-2 via precorrin-1. Then it catalyzes the NAD-dependent ring dehydrogenation of precorrin-2 to yield sirohydrochlorin. Finally, it catalyzes the ferrochelation of sirohydrochlorin to yield siroheme. The chain is Siroheme synthase from Tolumonas auensis (strain DSM 9187 / NBRC 110442 / TA 4).